The chain runs to 352 residues: Spermidine/putrescine import ATP-binding protein PotA (352 aa).

The region spanning 7-237 (IRLENVTKSF…PVNAFVADFI (231 aa)) is the ABC transporter domain. An ATP-binding site is contributed by 39–46 (GPSGCGKT).

Belongs to the ABC transporter superfamily. Spermidine/putrescine importer (TC 3.A.1.11.1) family. As to quaternary structure, the complex is composed of two ATP-binding proteins (PotA), two transmembrane proteins (PotB and PotC) and a solute-binding protein (PotD).

Its subcellular location is the cell membrane. The enzyme catalyses ATP + H2O + polyamine-[polyamine-binding protein]Side 1 = ADP + phosphate + polyamineSide 2 + [polyamine-binding protein]Side 1.. Its function is as follows. Part of the ABC transporter complex PotABCD involved in spermidine/putrescine import. Responsible for energy coupling to the transport system. This chain is Spermidine/putrescine import ATP-binding protein PotA, found in Acetivibrio thermocellus (strain ATCC 27405 / DSM 1237 / JCM 9322 / NBRC 103400 / NCIMB 10682 / NRRL B-4536 / VPI 7372) (Clostridium thermocellum).